Consider the following 250-residue polypeptide: 5-oxoprolinase subunit A (250 aa).

It belongs to the LamB/PxpA family. In terms of assembly, forms a complex composed of PxpA, PxpB and PxpC.

It carries out the reaction 5-oxo-L-proline + ATP + 2 H2O = L-glutamate + ADP + phosphate + H(+). In terms of biological role, catalyzes the cleavage of 5-oxoproline to form L-glutamate coupled to the hydrolysis of ATP to ADP and inorganic phosphate. The protein is 5-oxoprolinase subunit A of Thermus thermophilus (strain ATCC 27634 / DSM 579 / HB8).